The following is a 643-amino-acid chain: Replication protein E1 (643 aa).

A Nuclear localization signal motif is present at residues 83–85 (KRK). Phosphoserine; by host occurs at positions 89, 93, and 107. The Nuclear export signal motif lies at 106–115 (LSPRLGGLTL). A disordered region spans residues 155–184 (AVHGTMGNGGAVGSELGVQENEEGSTTSTP). The tract at residues 180 to 346 (TTSTPTTRVV…QTILEHCFAD (167 aa)) is DNA-binding region. In terms of domain architecture, SF3 helicase spans 445-595 (IDFLAFMSAF…FPLDTNGNPV (151 aa)). 471 to 478 (GPPNTGKS) is an ATP binding site. Residue lysine 552 forms a Glycyl lysine isopeptide (Lys-Gly) (interchain with G-Cter in SUMO) linkage.

This sequence belongs to the papillomaviridae E1 protein family. In terms of assembly, can form hexamers. Interacts with E2 protein; this interaction increases E1 DNA binding specificity. Interacts with host DNA polymerase subunit POLA2. Interacts with host single stranded DNA-binding protein RPA1. Interacts with host TOP1; this interaction stimulates the enzymatic activity of TOP1. In terms of processing, phosphorylated. Sumoylated.

It is found in the host nucleus. The catalysed reaction is Couples ATP hydrolysis with the unwinding of duplex DNA by translocating in the 3'-5' direction.. It catalyses the reaction ATP + H2O = ADP + phosphate + H(+). ATP-dependent DNA 3'-5' helicase required for initiation of viral DNA replication. It forms a complex with the viral E2 protein. The E1-E2 complex binds to the replication origin which contains binding sites for both proteins. During the initial step, a dimer of E1 interacts with a dimer of protein E2 leading to a complex that binds the viral origin of replication with high specificity. Then, a second dimer of E1 displaces the E2 dimer in an ATP-dependent manner to form the E1 tetramer. Following this, two E1 monomers are added to each half of the site, which results in the formation of two E1 trimers on the viral ori. Subsequently, two hexamers will be created. The double hexamer acts as a bi-directional helicase machinery and unwinds the viral DNA and then recruits the host DNA polymerase to start replication. The polypeptide is Replication protein E1 (Human papillomavirus 42).